A 1239-amino-acid polypeptide reads, in one-letter code: Structural polyprotein (1239 aa).

Residues 1 to 35 form a necessary for nucleocapsid assembly and virus assembly region; that stretch reads MFPYPTLNYPPMAPINPMAYRDPNPPRQVAPFRPP. The tract at residues 1–101 is disordered; that stretch reads MFPYPTLNYP…RKPKPGKRQR (101 aa). The segment covering 23 to 34 has biased composition (pro residues); sequence PNPPRQVAPFRP. The interval 36 to 69 is host transcription inhibition; that stretch reads LAAQIEDLRRSIANLTLKQRAPNPPAGPPAKRKK. Residues 43–50 carry the Supraphysiological nuclear export signal motif; it reads LRRSIANL. A glycan (N-linked (GlcNAc...) asparagine; by host) is linked at asparagine 49. The short motif at 66–69 is the Nuclear localization signal element; the sequence is KRKK. Residues 79 to 101 show a composition bias toward basic residues; the sequence is KKKRPPPPAKKQKRKPKPGKRQR. The tract at residues 81–111 is binding to the viral RNA; that stretch reads KRPPPPAKKQKRKPKPGKRQRMCMKLESDKT. The ribosome-binding stretch occupies residues 96–110; sequence PGKRQRMCMKLESDK. Serine 108 carries the post-translational modification Phosphoserine. The 150-residue stretch at 110 to 259 folds into the Peptidase S3 domain; sequence KTFPIMLNGQ…KDTPEGSEPW (150 aa). A Phosphothreonine modification is found at threonine 111. Residue histidine 136 is the Charge relay system of the active site. Positions 152–157 are interaction with spike glycoprotein E2; sequence KKASIY. Residues aspartate 158 and serine 210 each act as charge relay system in the active site. Residues 244–248 form an interaction with spike glycoprotein E2 region; the sequence is QKGVT. The tract at residues 260–271 is functions as an uncleaved signal peptide for the precursor of protein E3/E2; it reads SLATVMCVLANI. The Extracellular segment spans residues 260–681; sequence SLATVMCVLA…HVVVVYYYNR (422 aa). Cystine bridges form between cysteine 266-cysteine 275, cysteine 280-cysteine 284, cysteine 283-cysteine 315, cysteine 341-cysteine 444, cysteine 344-cysteine 349, cysteine 411-cysteine 425, cysteine 472-cysteine 585, cysteine 521-cysteine 545, and cysteine 523-cysteine 539. N-linked (GlcNAc...) asparagine; by host glycosylation occurs at asparagine 270. A glycan (N-linked (GlcNAc...) asparagine; by host) is linked at asparagine 637. The chain crosses the membrane as a helical span at residues 682 to 702; that stretch reads YPLTTIIGLCTCVAIIMVSCD. The Cytoplasmic portion of the chain corresponds to 703-742; sequence HPCGSFSGLRNLCITPYKLAPNAQVPILLALLCCIKPTRA. A lipid anchor (S-palmitoyl cysteine; by host) is attached at cysteine 705. Residues 710–714 are interaction with the capsid protein; sequence GLRNL. Positions 714–734 are transient transmembrane before p62-6K protein processing; that stretch reads LCITPYKLAPNAQVPILLALL. S-palmitoyl cysteine; by host attachment occurs at residues cysteine 715, cysteine 735, and cysteine 736. Cysteines 715 and 736 form a disulfide. At 743–754 the chain is on the extracellular side; it reads DDTLQVLNYLWN. A helical transmembrane segment spans residues 755-775; sequence NNQNFFWMQTLIPLAALIVCM. Position 776 (arginine 776) is a topological domain, cytoplasmic. Residues 777 to 797 form a helical membrane-spanning segment; sequence MLAALFCCGPAFLLVCGAWAA. At 798–1215 the chain is on the extracellular side; the sequence is AYEHTAVMPN…WSWLKVLVGG (418 aa). 4 disulfide bridges follow: cysteine 847-cysteine 912, cysteine 860-cysteine 892, cysteine 861-cysteine 894, and cysteine 866-cysteine 876. The E1 fusion peptide loop stretch occupies residues 882–899; sequence VYPFMWGGAYCFCDTENT. Residues asparagine 932 and asparagine 1069 are each glycosylated (N-linked (GlcNAc...) asparagine; by host). Disulfide bonds link cysteine 1058-cysteine 1070, cysteine 1100-cysteine 1175, and cysteine 1105-cysteine 1179. Residues 1216–1236 traverse the membrane as a helical segment; that stretch reads TSAFIVLGLIATAVVALVLFF. The Cytoplasmic segment spans residues 1237–1239; that stretch reads HRH.

As to quaternary structure, homodimer. Homomultimer. Interacts with host karyopherin KPNA4; this interaction allows the nuclear import of the viral capsid protein. Interacts with spike glycoprotein E2. Interacts with host IRAK1; the interaction leads to inhibition of IRAK1-dependent signaling. Part of a tetrameric complex composed of host CRM1, host importin alpha/beta dimer and the viral capsid; this complex blocks the receptor-mediated transport through the nuclear pore. Interacts with host phosphatase PPP1CA; this interaction dephosphorylates the capsid protein, which increases its ability to bind to the viral genome. The precursor of protein E3/E2 and E1 form a heterodimer shortly after synthesis. In terms of assembly, the precursor of protein E3/E2 and E1 form a heterodimer shortly after synthesis. Processing of the precursor of protein E3/E2 into E2 and E3 results in a heterodimer of the spike glycoproteins E2 and E1. Spike at virion surface are constituted of three E2-E1 heterodimers. After target cell attachment and endocytosis, E1 change conformation to form homotrimers. E2-E1 heterodimers interact with host VLDLR or LRP8/APOER2 to mediate viral entry. Interacts with 6K protein. As to quaternary structure, interacts with spike glycoprotein E1. Processing of the precursor of protein E3/E2 into E2 and E3 results in a heterodimer of the spike glycoproteins E2 and E1. Spike at virion surface are constituted of a trimer of E2-E1 heterodimers. Interacts with 6K protein. E2-E1 heterodimers interact with host VLDLR or LRP8/APOER2 to mediate viral entry. Interacts (via E2-A) with host VLDLR (via class A repeats); this interaction mediates viral entry into host cell. Interacts with host LRP8/APOER2 (via class A repeats); this interaction mediates viral entry into host cell. Oligomer. Interacts with spike glycoprotein E1. Interacts with spike glycoprotein E2. Structural polyprotein: Specific enzymatic cleavages in vivo yield mature proteins. Capsid protein is auto-cleaved during polyprotein translation, unmasking a signal peptide at the N-terminus of the precursor of E3/E2. The remaining polyprotein is then targeted to the host endoplasmic reticulum, where host signal peptidase cleaves it into pE2, 6K and E1 proteins. pE2 is further processed to mature E3 and E2 by host furin in trans-Golgi vesicle. In terms of processing, phosphorylated on serine and threonine residues. Post-translationally, palmitoylated via thioester bonds. These palmitoylations may induce disruption of the C-terminus transmembrane. This would result in the reorientation of E2 C-terminus from lumenal to cytoplasmic side. N-glycosylated. In terms of processing, palmitoylated via thioester bonds.

It is found in the virion. It localises to the host cytoplasm. The protein localises to the host cell membrane. Its subcellular location is the host nucleus. The protein resides in the virion membrane. It is found in the host Golgi apparatus. It localises to the host trans-Golgi network. The protein localises to the host endoplasmic reticulum. It catalyses the reaction Autocatalytic release of the core protein from the N-terminus of the togavirus structural polyprotein by hydrolysis of a -Trp-|-Ser- bond.. Forms an icosahedral capsid with a T=4 symmetry composed of 240 copies of the capsid protein surrounded by a lipid membrane through which penetrate 80 spikes composed of trimers of E1-E2 heterodimers. The capsid protein binds to the viral RNA genome at a site adjacent to a ribosome binding site for viral genome translation following genome release. Possesses a protease activity that results in its autocatalytic cleavage from the nascent structural protein. Following its self-cleavage, the capsid protein transiently associates with ribosomes, and within several minutes the protein binds to viral RNA and rapidly assembles into icosahedric core particles. The resulting nucleocapsid eventually associates with the cytoplasmic domain of the spike glycoprotein E2 at the cell membrane, leading to budding and formation of mature virions. In case of infection, new virions attach to target cells and after clathrin-mediated endocytosis their membrane fuses with the host endosomal membrane. This leads to the release of the nucleocapsid into the cytoplasm, followed by an uncoating event necessary for the genomic RNA to become accessible. The uncoating might be triggered by the interaction of capsid proteins with ribosomes. Binding of ribosomes would release the genomic RNA since the same region is genomic RNA-binding and ribosome-binding. Specifically inhibits interleukin-1 receptor-associated kinase 1/IRAK1-dependent signaling during viral entry, representing a means by which the alphaviruses may evade innate immune detection and activation prior to viral gene expression. Inhibits host transcription. Forms a tetrameric complex with XPO1/CRM1 and the nuclear import receptor importin. This complex blocks the central channel of host nuclear pores thereby inhibiting the receptor-mediated nuclear transport and thus the host mRNA and rRNA transcription. The inhibition of transcription is linked to a cytopathic effect on the host cell. Functionally, provides the signal sequence for the translocation of the precursor of protein E3/E2 to the host endoplasmic reticulum. Furin-cleaved E3 remains associated with spike glycoprotein E1 and mediates pH protection of the latter during the transport via the secretory pathway. After virion release from the host cell, the assembly protein E3 is gradually released in the extracellular space. Its function is as follows. Plays a role in viral attachment to target host cell, by binding to the cell receptors VLDLR or LRP8/APOER2. Synthesized as a p62 precursor which is processed by furin at the cell membrane just before virion budding, giving rise to E2-E1 heterodimer. The p62-E1 heterodimer is stable, whereas E2-E1 is unstable and dissociate at low pH. p62 is processed at the last step, presumably to avoid E1 fusion activation before its final export to cell surface. E2 C-terminus contains a transitory transmembrane that would be disrupted by palmitoylation, resulting in reorientation of the C-terminal tail from lumenal to cytoplasmic side. This step is critical since E2 C-terminus is involved in budding by interacting with capsid proteins. This release of E2 C-terminus in cytoplasm occurs lately in protein export, and precludes premature assembly of particles at the endoplasmic reticulum membrane. In terms of biological role, acts as a viroporin that participates in virus glycoprotein processing and transport to the plasma membrane, cell permeabilization and budding of viral particles. Disrupts the calcium homeostasis of the cell, probably at the endoplasmic reticulum level. This leads to cytoplasmic calcium elevation. Because of its lipophilic properties, the 6K protein is postulated to influence the selection of lipids that interact with the transmembrane domains of the glycoproteins, which, in turn, affects the deformability of the bilayer required for the extreme curvature that occurs as budding proceeds. Present in low amount in virions, about 3% compared to viral glycoproteins. Class II viral fusion protein. Fusion activity is inactive as long as E1 is bound to E2 in mature virion. After virus attachment to target cell via host VLDLR or LRP8/APOER2 and endocytosis, acidification of the endosome induces dissociation of E1/E2 heterodimer and concomitant trimerization of the E1 subunits. This E1 trimer is fusion active, and promotes release of viral nucleocapsid in cytoplasm after endosome and viral membrane fusion. Efficient fusion requires the presence of cholesterol and sphingolipid in the target membrane. This is Structural polyprotein from Aedes (Human).